The sequence spans 210 residues: Na(+)-translocating NADH-quinone reductase subunit D (210 aa).

6 helical membrane-spanning segments follow: residues 14 to 34, 42 to 62, 72 to 92, 103 to 123, 131 to 151, and 178 to 198; these read PIIS…ALAV, LVMT…ISMI, IIVQ…VLQA, VFVG…AYAM, FMDG…VGFV, and NGLL…IWII.

It belongs to the NqrDE/RnfAE family. As to quaternary structure, composed of six subunits; NqrA, NqrB, NqrC, NqrD, NqrE and NqrF.

It localises to the cell inner membrane. The catalysed reaction is a ubiquinone + n Na(+)(in) + NADH + H(+) = a ubiquinol + n Na(+)(out) + NAD(+). NQR complex catalyzes the reduction of ubiquinone-1 to ubiquinol by two successive reactions, coupled with the transport of Na(+) ions from the cytoplasm to the periplasm. NqrA to NqrE are probably involved in the second step, the conversion of ubisemiquinone to ubiquinol. The sequence is that of Na(+)-translocating NADH-quinone reductase subunit D from Shewanella loihica (strain ATCC BAA-1088 / PV-4).